The following is a 1390-amino-acid chain: DNA-directed RNA polymerase subunit beta (1390 aa).

Belongs to the RNA polymerase beta chain family. In terms of assembly, the RNAP catalytic core consists of 2 alpha, 1 beta, 1 beta' and 1 omega subunit. When a sigma factor is associated with the core the holoenzyme is formed, which can initiate transcription.

The catalysed reaction is RNA(n) + a ribonucleoside 5'-triphosphate = RNA(n+1) + diphosphate. DNA-dependent RNA polymerase catalyzes the transcription of DNA into RNA using the four ribonucleoside triphosphates as substrates. This Mycoplasma genitalium (strain ATCC 33530 / DSM 19775 / NCTC 10195 / G37) (Mycoplasmoides genitalium) protein is DNA-directed RNA polymerase subunit beta.